The chain runs to 426 residues: 3-phosphoshikimate 1-carboxyvinyltransferase (426 aa).

Residues K22, S23, and R27 each coordinate 3-phosphoshikimate. Position 22 (K22) interacts with phosphoenolpyruvate. Residues G96 and R124 each coordinate phosphoenolpyruvate. S170 and S171 together coordinate 3-phosphoshikimate. Residue Q172 coordinates phosphoenolpyruvate. 3-phosphoshikimate-binding residues include S198, D314, N337, and K341. Catalysis depends on D314, which acts as the Proton acceptor. Phosphoenolpyruvate is bound by residues R345, R387, and K412.

The protein belongs to the EPSP synthase family. As to quaternary structure, homotetramer.

It is found in the cytoplasm. It catalyses the reaction 3-phosphoshikimate + phosphoenolpyruvate = 5-O-(1-carboxyvinyl)-3-phosphoshikimate + phosphate. It functions in the pathway metabolic intermediate biosynthesis; chorismate biosynthesis; chorismate from D-erythrose 4-phosphate and phosphoenolpyruvate: step 6/7. Catalyzes the transfer of the enolpyruvyl moiety of phosphoenolpyruvate (PEP) to the 5-hydroxyl of shikimate-3-phosphate (S3P) to produce enolpyruvyl shikimate-3-phosphate and inorganic phosphate. This chain is 3-phosphoshikimate 1-carboxyvinyltransferase, found in Vibrio cholerae serotype O1 (strain ATCC 39315 / El Tor Inaba N16961).